The sequence spans 100 residues: Putative antiporter subunit mnhF2 (100 aa).

The next 3 helical transmembrane spans lie at 6-26, 38-58, and 62-82; these read TNFF…IGLF, VVAF…VSVI, and VSFL…SVSI.

Belongs to the CPA3 antiporters (TC 2.A.63) subunit F family. May form a heterooligomeric complex that consists of seven subunits: mnhA2, mnhB2, mnhC2, mnhD2, mnhE2, mnhF2 and mnhG2.

It localises to the cell membrane. The sequence is that of Putative antiporter subunit mnhF2 (mnhF2) from Staphylococcus haemolyticus (strain JCSC1435).